The following is a 337-amino-acid chain: DNA-directed RNA polymerase subunit alpha (337 aa).

Positions 1-233 (MIQKNWQELI…DQLSIFVNFE (233 aa)) are alpha N-terminal domain (alpha-NTD). The segment at 249–337 (FNPALLKKVD…DLAKRYEDQY (89 aa)) is alpha C-terminal domain (alpha-CTD).

The protein belongs to the RNA polymerase alpha chain family. Homodimer. The RNAP catalytic core consists of 2 alpha, 1 beta, 1 beta' and 1 omega subunit. When a sigma factor is associated with the core the holoenzyme is formed, which can initiate transcription.

The enzyme catalyses RNA(n) + a ribonucleoside 5'-triphosphate = RNA(n+1) + diphosphate. In terms of biological role, DNA-dependent RNA polymerase catalyzes the transcription of DNA into RNA using the four ribonucleoside triphosphates as substrates. This Brucella ovis (strain ATCC 25840 / 63/290 / NCTC 10512) protein is DNA-directed RNA polymerase subunit alpha.